Consider the following 399-residue polypeptide: Glycerol-1-phosphate dehydrogenase [NAD(P)+] (399 aa).

Residues aspartate 56, 118–122 (GTIHD), and 140–143 (TAPS) contribute to the NAD(+) site. Residue aspartate 145 participates in substrate binding. Residue serine 149 participates in NAD(+) binding. Aspartate 192 serves as a coordination point for substrate. Residues aspartate 192 and histidine 272 each coordinate Ni(2+). Substrate is bound at residue histidine 276. Histidine 292 lines the Ni(2+) pocket.

This sequence belongs to the glycerol-1-phosphate dehydrogenase family. In terms of assembly, homodimer. Requires Ni(2+) as cofactor.

It is found in the cytoplasm. The catalysed reaction is sn-glycerol 1-phosphate + NAD(+) = dihydroxyacetone phosphate + NADH + H(+). The enzyme catalyses sn-glycerol 1-phosphate + NADP(+) = dihydroxyacetone phosphate + NADPH + H(+). In terms of biological role, catalyzes the NAD(P)H-dependent reduction of dihydroxyacetonephosphate (DHAP or glycerone phosphate) to glycerol 1-phosphate (G1P). The G1P thus generated is probably used for the synthesis of phosphoglycerolipids in Gram-positive bacterial species. The sequence is that of Glycerol-1-phosphate dehydrogenase [NAD(P)+] from Halalkalibacterium halodurans (strain ATCC BAA-125 / DSM 18197 / FERM 7344 / JCM 9153 / C-125) (Bacillus halodurans).